Consider the following 1034-residue polypeptide: MANFFIRRPIFAWVLAIILMMAGALAILQLPVAQYPTIAPPAVSVSANYPGADAQTVQDTVTQVIEQNMNGIDNLMYMSSTSDSAGSVTITLTFQSGTDPDIAQVQVQNKLQLATPLLPQEVQQQGISVEKSSSSYLMVAGFVSDNPGTTQDDISDYVASNVKDTLSRLNGVGDVQLFGAQYAMRIWLDADLLNKYKLTPVDVINQLKVQNDQIAAGQLGGTPALPGQQLNASIIAQTRFKNPEEFGKVTLRVNSDGSVVRLKDVARVELGGENYNVIARINGKPAAGLGIKLATGANALDTAKAIKAKLAELQPFFPQGMKVLYPYDTTPFVQLSIHEVVKTLFEAIMLVFLVMYLFLQNMRATLIPTIAVPVVLLGTFAILAAFGYSINTLTMFGMVLAIGLLVDDAIVVVENVERVMMEDKLPPKEATEKSMSQIQGALVGIAMVLSAVFIPMAFFGGSTGAIYRQFSITIVSAMALSVLVALILTPALCATLLKPVSAEHHENKGGFFGWFNTTFDHSVNHYTNSVGKILGSTGRYLLIYALIVAGMVVLFLRLPSSFLPEEDQGVFLTMIQLPAGATQERTQKVLDQVTDYYLKNEKANVESVFTVNGFSFSGQAQNAGMAFVSLKPWEERNGDENSAEAVIHRAKMELGKIRDGFVIPFNMPAIVELGTATGFDFELIDQAGLGHDALTQARNQLLGMAAQHPASLVSVRPNGLEDTAQFKLEVDQEKAQALGVSLSDINQTISTALGGTYVNDFIDRGRVKKLYVQADAKFRMLPEDVDKLYVRSANGEMVPFSAFTTSHWVYGSPRLERYNGLPSMEIQGEAAPGTSSGDAMALMENLASKLPAGIGYDWTGMSYQERLSGNQAPALVAISFVVVFLCLAALYESWSIPVSVMLVVPLGIVGVLLAATLFNQKNDVYFMVGLLTTIGLSAKNAILIVEFAKDLMEKEGKGVVEATLMAVRMRLRPILMTSLAFILGVLPLAISNGAGSGAQNAVGIGVMGGMVSATLLAIFFVPVFFVVIRRCFKG.

The Cytoplasmic portion of the chain corresponds to 1 to 9 (MANFFIRRP). Residues 10–28 (IFAWVLAIILMMAGALAIL) traverse the membrane as a helical segment. Over 29–339 (QLPVAQYPTI…TPFVQLSIHE (311 aa)) the chain is Periplasmic. Residues 340–359 (VVKTLFEAIMLVFLVMYLFL) traverse the membrane as a helical segment. Residues 360–365 (QNMRAT) are Cytoplasmic-facing. Residues 366–385 (LIPTIAVPVVLLGTFAILAA) form a helical membrane-spanning segment. Topologically, residues 386 to 391 (FGYSIN) are periplasmic. A helical membrane pass occupies residues 392–413 (TLTMFGMVLAIGLLVDDAIVVV). Residues 414-441 (ENVERVMMEDKLPPKEATEKSMSQIQGA) lie on the Cytoplasmic side of the membrane. A helical membrane pass occupies residues 442-460 (LVGIAMVLSAVFIPMAFFG). Residues 461-473 (GSTGAIYRQFSIT) are Periplasmic-facing. A helical transmembrane segment spans residues 474-496 (IVSAMALSVLVALILTPALCATL). The Cytoplasmic portion of the chain corresponds to 497–537 (LKPVSAEHHENKGGFFGWFNTTFDHSVNHYTNSVGKILGST). The helical transmembrane segment at 538–556 (GRYLLIYALIVAGMVVLFL) threads the bilayer. At 557–871 (RLPSSFLPEE…SYQERLSGNQ (315 aa)) the chain is on the periplasmic side. A helical membrane pass occupies residues 872–891 (APALVAISFVVVFLCLAALY). Over 892–897 (ESWSIP) the chain is Cytoplasmic. The chain crosses the membrane as a helical span at residues 898–917 (VSVMLVVPLGIVGVLLAATL). The Periplasmic portion of the chain corresponds to 918-923 (FNQKND). Residues 924 to 945 (VYFMVGLLTTIGLSAKNAILIV) form a helical membrane-spanning segment. Over 946–973 (EFAKDLMEKEGKGVVEATLMAVRMRLRP) the chain is Cytoplasmic. Residues 974 to 992 (ILMTSLAFILGVLPLAISN) form a helical membrane-spanning segment. Over 993 to 1005 (GAGSGAQNAVGIG) the chain is Periplasmic. Residues 1006–1028 (VMGGMVSATLLAIFFVPVFFVVI) form a helical membrane-spanning segment. At 1029–1034 (RRCFKG) the chain is on the cytoplasmic side.

This sequence belongs to the resistance-nodulation-cell division (RND) (TC 2.A.6) family. In terms of assembly, part of the tripartite efflux system AcrEF-TolC, which is composed of an inner membrane transporter, AcrF, a periplasmic membrane fusion protein, AcrE, and an outer membrane component, TolC. The complex forms a large protein conduit and can translocate molecules across both the inner and outer membranes.

The protein resides in the cell inner membrane. In terms of biological role, part of the tripartite efflux system AcrEF-TolC. Involved in the efflux of indole and organic solvents. This chain is Multidrug export protein AcrF (acrF), found in Escherichia coli (strain K12).